A 266-amino-acid polypeptide reads, in one-letter code: MKLKSFGVFGNPIKHSKSPLIHNACFLTFQKELGFLGHYHPILLPLESRIKNEFLHLGLSGANVTLPFKERAFQICDKIKGIALECASVNTLVLENDELVGYNTDALGFYLSLKHQNYQNDQNALILGAGGSAKALACGLQKQGLKVSVLNRSARGLDFFQRLGCDCFMEPPKSAFDLIINATSASLHNELPLNKEVLKGYFKESKLAYDLAYGFLTPFLSLAKELKIPFQDGKDMLIYQASLSFEKFSDSQIPYSKAFEVMRSVF.

Shikimate-binding positions include 16-18 (SKS) and Thr65. Lys69 functions as the Proton acceptor in the catalytic mechanism. 2 residues coordinate shikimate: Asn90 and Asp105. Residues 128–132 (GAGGS) and Leu211 contribute to the NADP(+) site. Tyr213 contributes to the shikimate binding site. Residue Gly233 participates in NADP(+) binding.

It belongs to the shikimate dehydrogenase family. In terms of assembly, homodimer.

The catalysed reaction is shikimate + NADP(+) = 3-dehydroshikimate + NADPH + H(+). It functions in the pathway metabolic intermediate biosynthesis; chorismate biosynthesis; chorismate from D-erythrose 4-phosphate and phosphoenolpyruvate: step 4/7. Involved in the biosynthesis of the chorismate, which leads to the biosynthesis of aromatic amino acids. Catalyzes the reversible NADPH linked reduction of 3-dehydroshikimate (DHSA) to yield shikimate (SA). The polypeptide is Shikimate dehydrogenase (NADP(+)) (Helicobacter pylori (strain J99 / ATCC 700824) (Campylobacter pylori J99)).